The sequence spans 246 residues: Apolipoprotein L domain-containing protein 1 (246 aa).

The next 2 membrane-spanning stretches (helical) occupy residues Ser-50–Leu-72 and Gly-89–Phe-109. Residues Leu-193–Ser-220 are a coiled coil.

It belongs to the apolipoprotein L family. Present at low levels in brain vascular cells (at protein level).

Its subcellular location is the cell membrane. It is found in the cell junction. The protein localises to the cytoplasmic vesicle. The protein resides in the secretory vesicle. In terms of biological role, is a modulator of endothelial barrier permeability, required for proper organization of endothelial cell-cell junctions and cytoskeleton. It also plays a role in the modulation of secretory autophagy. May affect blood-brain barrier permeability. This is Apolipoprotein L domain-containing protein 1 (Apold1) from Rattus norvegicus (Rat).